The chain runs to 119 residues: Putative mating-type protein A2 (119 aa).

The homeobox; TALE-type DNA-binding region spans 38 to 100 (KPYRGHRFTK…NRRRKEKTIT (63 aa)).

It belongs to the TALE/M-ATYP homeobox family.

It localises to the nucleus. Probably not a functional protein. Cells lacking A2 show no obvious alterations in mating, sporulation and cell growth. This chain is Putative mating-type protein A2 (MATA2), found in Saccharomyces cerevisiae (Baker's yeast).